The sequence spans 342 residues: Phosphoribosylformylglycinamidine cyclo-ligase (342 aa).

This sequence belongs to the AIR synthase family.

Its subcellular location is the cytoplasm. The catalysed reaction is 2-formamido-N(1)-(5-O-phospho-beta-D-ribosyl)acetamidine + ATP = 5-amino-1-(5-phospho-beta-D-ribosyl)imidazole + ADP + phosphate + H(+). The protein operates within purine metabolism; IMP biosynthesis via de novo pathway; 5-amino-1-(5-phospho-D-ribosyl)imidazole from N(2)-formyl-N(1)-(5-phospho-D-ribosyl)glycinamide: step 2/2. This is Phosphoribosylformylglycinamidine cyclo-ligase from Staphylococcus aureus (strain MSSA476).